The following is a 219-amino-acid chain: Mediator of RNA polymerase II transcription subunit 20 (219 aa).

Belongs to the Mediator complex subunit 20 family. In terms of assembly, component of the Mediator complex.

The protein resides in the nucleus. Its function is as follows. Component of the Mediator complex, a coactivator involved in the regulated transcription of nearly all RNA polymerase II-dependent genes. Mediator functions as a bridge to convey information from gene-specific regulatory proteins to the basal RNA polymerase II transcription machinery. Mediator is recruited to promoters by direct interactions with regulatory proteins and serves as a scaffold for the assembly of a functional preinitiation complex with RNA polymerase II and the general transcription factors. The sequence is that of Mediator of RNA polymerase II transcription subunit 20 (MED20) from Aedes aegypti (Yellowfever mosquito).